The chain runs to 201 residues: Histidine biosynthesis bifunctional protein HisIE (201 aa).

The phosphoribosyl-AMP cyclohydrolase stretch occupies residues 1–111 (MKINWQKVDN…EKTTQPDWIF (111 aa)). Residues 112–201 (LSKLERLIAS…IHKLKERHTK (90 aa)) form a phosphoribosyl-ATP pyrophosphohydrolase region.

This sequence in the N-terminal section; belongs to the PRA-CH family. In the C-terminal section; belongs to the PRA-PH family.

Its subcellular location is the cytoplasm. It catalyses the reaction 1-(5-phospho-beta-D-ribosyl)-ATP + H2O = 1-(5-phospho-beta-D-ribosyl)-5'-AMP + diphosphate + H(+). The enzyme catalyses 1-(5-phospho-beta-D-ribosyl)-5'-AMP + H2O = 1-(5-phospho-beta-D-ribosyl)-5-[(5-phospho-beta-D-ribosylamino)methylideneamino]imidazole-4-carboxamide. It participates in amino-acid biosynthesis; L-histidine biosynthesis; L-histidine from 5-phospho-alpha-D-ribose 1-diphosphate: step 2/9. It functions in the pathway amino-acid biosynthesis; L-histidine biosynthesis; L-histidine from 5-phospho-alpha-D-ribose 1-diphosphate: step 3/9. The polypeptide is Histidine biosynthesis bifunctional protein HisIE (hisI) (Pasteurella multocida (strain Pm70)).